We begin with the raw amino-acid sequence, 282 residues long: Reaction center protein L chain (282 aa).

Over 2-32 (ALLSFERKYRVPGGTLVGGNLFDFWVGPFYV) the chain is Cytoplasmic. Residues 33–56 (GFFGVATFFFAALGIILIAWSAVL) form a helical membrane-spanning segment. Residues 57–83 (QGTWNPQLISVYPPALEYGLGGAPLAK) lie on the Periplasmic side of the membrane. Residues 84-112 (GGLWQIITICATGAFVSWALREVEICRKL) form a helical membrane-spanning segment. At 113-116 (GIGY) the chain is on the cytoplasmic side. Residues 117–139 (HIPFAFAFAILAYLTLVLFRPVM) form a helical membrane-spanning segment. The Periplasmic segment spans residues 140–171 (MGAWGYAFPYGIWTHLDWVSNTGYTYGNFHYN). (7R,8Z)-bacteriochlorophyll b is bound by residues His-154 and His-174. Residues 172–199 (PAHMIAISFFFTNALALALHGALVLSAA) traverse the membrane as a helical segment. Residue His-191 participates in Fe cation binding. The Cytoplasmic segment spans residues 200–225 (NPEKGKEMRTPDHEDTFFRDLVGYSI). Position 217 (Phe-217) interacts with a ubiquinone. A helical transmembrane segment spans residues 226–251 (GTLGIHRLGLLLSLSAVFFSALCMII). Residue His-231 coordinates Fe cation. The Periplasmic segment spans residues 252-282 (TGTIWFDQWVDWWQWWVKLPWWANIPGGING).

This sequence belongs to the reaction center PufL/M/PsbA/D family. Reaction center is composed of four bacteriochlorophylls, two bacteriopheophytins, two ubiquinones, one iron, and three highly hydrophobic polypeptide chains (designated L, M, and H).

Its subcellular location is the cellular chromatophore membrane. Functionally, the reaction center is a membrane-bound complex that mediates the initial photochemical event in the electron transfer process of photosynthesis. The protein is Reaction center protein L chain (pufL) of Cereibacter sphaeroides (strain ATCC 17023 / DSM 158 / JCM 6121 / CCUG 31486 / LMG 2827 / NBRC 12203 / NCIMB 8253 / ATH 2.4.1.) (Rhodobacter sphaeroides).